A 235-amino-acid chain; its full sequence is Protein shisa-5 (235 aa).

Positions 1–26 (MAAPAPSLWTLLLLLLLLPPPPGAHG) are cleaved as a signal peptide. The Extracellular portion of the chain corresponds to 27–105 (ELCRPFGEDN…SSFDSDPMSG (79 aa)). The chain crosses the membrane as a helical span at residues 106–126 (FGATVAIGVTIFVVFIATIII). The Cytoplasmic portion of the chain corresponds to 127–235 (CFTCSCCCLY…TYMDSLKTIP (109 aa)). Positions 157–235 (APYPQPQPQP…TYMDSLKTIP (79 aa)) are disordered. Composition is skewed to pro residues over residues 159–172 (YPQP…PSYP) and 181–211 (PMPP…PPPY).

Belongs to the shisa family. Interacts with PDCD6; PDCD6 can stabilize SHISA5. In terms of tissue distribution, spleen and thymus.

It is found in the endoplasmic reticulum membrane. The protein localises to the nucleus membrane. Can induce apoptosis in a caspase-dependent manner and plays a role in p53/TP53-dependent apoptosis. The polypeptide is Protein shisa-5 (Shisa5) (Mus musculus (Mouse)).